Here is a 214-residue protein sequence, read N- to C-terminus: Probable DNA (cytosine-5)-methyltransferase (214 aa).

Residue C62 is part of the active site.

This sequence belongs to the class I-like SAM-binding methyltransferase superfamily. C5-methyltransferase family. As to quaternary structure, probably requires another subunit for function.

The enzyme catalyses a 2'-deoxycytidine in DNA + S-adenosyl-L-methionine = a 5-methyl-2'-deoxycytidine in DNA + S-adenosyl-L-homocysteine + H(+). Functionally, this is probably the methylase that recognizes and modifies 5'-CpG-3'. In Dryophytes versicolor (chameleon treefrog), this protein is Probable DNA (cytosine-5)-methyltransferase.